We begin with the raw amino-acid sequence, 289 residues long: Thymidylate synthase (289 aa).

DUMP is bound by residues Arg21 and 150-151 (RR). Residue Cys170 is the Nucleophile of the active site. DUMP-binding positions include 191–194 (RSGD), Asn202, and 232–234 (HIY). Asp194 contributes to the (6R)-5,10-methylene-5,6,7,8-tetrahydrofolate binding site. A (6R)-5,10-methylene-5,6,7,8-tetrahydrofolate-binding site is contributed by Ala288.

Belongs to the thymidylate synthase family. Bacterial-type ThyA subfamily. As to quaternary structure, homodimer.

The protein localises to the cytoplasm. The catalysed reaction is dUMP + (6R)-5,10-methylene-5,6,7,8-tetrahydrofolate = 7,8-dihydrofolate + dTMP. The protein operates within pyrimidine metabolism; dTTP biosynthesis. In terms of biological role, catalyzes the reductive methylation of 2'-deoxyuridine-5'-monophosphate (dUMP) to 2'-deoxythymidine-5'-monophosphate (dTMP) while utilizing 5,10-methylenetetrahydrofolate (mTHF) as the methyl donor and reductant in the reaction, yielding dihydrofolate (DHF) as a by-product. This enzymatic reaction provides an intracellular de novo source of dTMP, an essential precursor for DNA biosynthesis. The chain is Thymidylate synthase from Mycoplasmopsis synoviae (strain 53) (Mycoplasma synoviae).